The chain runs to 864 residues: Xylosyltransferase 2 (864 aa).

At 1 to 15 the chain is on the cytoplasmic side; it reads MVASARVQKLVRRYK. The helical; Signal-anchor for type II membrane protein transmembrane segment at 16-36 threads the bilayer; sequence LAIATALAILLLQGLVVWSFS. Over 37-864 the chain is Lumenal; that stretch reads GLEEDEPGEK…GPVKADGRLR (828 aa). 2 disordered regions span residues 39–123 and 136–158; these read EEDE…RQNL and AGFPQHGDTGSVEGAPQPTDNSF. Positions 53–65 are enriched in basic and acidic residues; that stretch reads RPLDPGEGSKDTD. A compositionally biased stretch (basic residues) spans 73–82; it reads SAGRRHGRWR. N-linked (GlcNAc...) asparagine glycosylation occurs at asparagine 122. Disulfide bonds link cysteine 162-cysteine 190, cysteine 206-cysteine 448, cysteine 467-cysteine 480, and cysteine 469-cysteine 478. UDP-alpha-D-xylose is bound by residues valine 239, aspartate 267, and 296 to 298; that span reads TIW. N-linked (GlcNAc...) asparagine glycosylation occurs at asparagine 327. 400–401 contributes to the UDP-alpha-D-xylose binding site; it reads DW. UDP-alpha-D-xylose contacts are provided by residues serine 481 and 504–505; that span reads RK. Intrachain disulfides connect cysteine 580-cysteine 832 and cysteine 825-cysteine 838. An N-linked (GlcNAc...) asparagine glycan is attached at asparagine 682.

It belongs to the glycosyltransferase 14 family. XylT subfamily. Monomer. Mg(2+) serves as cofactor. Requires Mn(2+) as cofactor. In terms of processing, contains disulfide bonds.

It is found in the golgi apparatus membrane. It localises to the secreted. The catalysed reaction is UDP-alpha-D-xylose + L-seryl-[protein] = 3-O-(beta-D-xylosyl)-L-seryl-[protein] + UDP + H(+). It participates in glycan metabolism; chondroitin sulfate biosynthesis. Its pathway is glycan metabolism; heparan sulfate biosynthesis. Functionally, catalyzes the first step in the biosynthesis of chondroitin sulfate, heparan sulfate and dermatan sulfate proteoglycans, such as DCN. Transfers D-xylose from UDP-D-xylose to specific serine residues of the core protein. The polypeptide is Xylosyltransferase 2 (Xylt2) (Rattus norvegicus (Rat)).